A 389-amino-acid chain; its full sequence is Succinate--CoA ligase [ADP-forming] subunit beta (389 aa).

The ATP-grasp domain occupies 9 to 236 (KELFAKHGVP…RDATDPLELK (228 aa)). ATP is bound by residues Lys45, 52–54 (GRG), Ser94, and Glu99. Positions 191 and 205 each coordinate Mg(2+). Substrate-binding positions include Asn256 and 318–320 (GIT).

The protein belongs to the succinate/malate CoA ligase beta subunit family. As to quaternary structure, heterotetramer of two alpha and two beta subunits. Requires Mg(2+) as cofactor.

It catalyses the reaction succinate + ATP + CoA = succinyl-CoA + ADP + phosphate. The enzyme catalyses GTP + succinate + CoA = succinyl-CoA + GDP + phosphate. The protein operates within carbohydrate metabolism; tricarboxylic acid cycle; succinate from succinyl-CoA (ligase route): step 1/1. Succinyl-CoA synthetase functions in the citric acid cycle (TCA), coupling the hydrolysis of succinyl-CoA to the synthesis of either ATP or GTP and thus represents the only step of substrate-level phosphorylation in the TCA. The beta subunit provides nucleotide specificity of the enzyme and binds the substrate succinate, while the binding sites for coenzyme A and phosphate are found in the alpha subunit. The polypeptide is Succinate--CoA ligase [ADP-forming] subunit beta (Rhodococcus erythropolis (strain PR4 / NBRC 100887)).